Consider the following 595-residue polypeptide: L-allo-isoleucine:holo-[CmaA peptidyl-carrier protein] ligase (595 aa).

The region spanning 507-582 (VVSPQAGSAV…EWVQYYATHA (76 aa)) is the Carrier domain. At Ser542 the chain carries O-(pantetheine 4'-phosphoryl)serine.

It belongs to the ATP-dependent AMP-binding enzyme family. As to quaternary structure, homodimer. It depends on pantetheine 4'-phosphate as a cofactor.

The catalysed reaction is L-alloisoleucine + holo-[CmaA peptidyl-carrier protein] + ATP = L-alloisoleucyl-[CmaA peptidyl-carrier protein] + AMP + diphosphate. Functionally, involved in the biosynthesis of the phytotoxin coronatine (COR) which mimics the plant hormone jasmonic acid isoleucine and promotes opening of stomata for bacterial entry, bacterial growth in the apoplast, systemic susceptibility, and disease symptoms. CmaA catalyzes the adenylation of L-allo-isoleucine (via the A domain) and the attachment of L-allo-isoleucine to the 4'-phosphopantetheine arm located within the T domain of CmaA. It can also use L-isoleucine, L-leucine and L-valine as substrates. The polypeptide is L-allo-isoleucine:holo-[CmaA peptidyl-carrier protein] ligase (Pseudomonas savastanoi pv. glycinea (Pseudomonas syringae pv. glycinea)).